Consider the following 424-residue polypeptide: Enolase (424 aa).

Gln-162 is a binding site for (2R)-2-phosphoglycerate. Glu-204 serves as the catalytic Proton donor. Mg(2+) contacts are provided by Asp-241, Glu-284, and Asp-311. Positions 336, 365, 366, and 387 each coordinate (2R)-2-phosphoglycerate. Lys-336 (proton acceptor) is an active-site residue.

This sequence belongs to the enolase family. Mg(2+) serves as cofactor.

The protein resides in the cytoplasm. Its subcellular location is the secreted. It is found in the cell surface. It carries out the reaction (2R)-2-phosphoglycerate = phosphoenolpyruvate + H2O. The protein operates within carbohydrate degradation; glycolysis; pyruvate from D-glyceraldehyde 3-phosphate: step 4/5. Functionally, catalyzes the reversible conversion of 2-phosphoglycerate (2-PG) into phosphoenolpyruvate (PEP). It is essential for the degradation of carbohydrates via glycolysis. In Mesorhizobium japonicum (strain LMG 29417 / CECT 9101 / MAFF 303099) (Mesorhizobium loti (strain MAFF 303099)), this protein is Enolase.